Here is a 607-residue protein sequence, read N- to C-terminus: CUB and zona pellucida-like domain-containing protein 1 (607 aa).

The N-terminal stretch at M1 to A19 is a signal peptide. C17 and C58 are joined by a disulfide. CUB domains are found at residues Q20–S146 and C154–I265. At Q20–R568 the chain is on the lumenal side. Residues N22, N57, and N67 are each glycosylated (N-linked (GlcNAc...) asparagine). Cystine bridges form between C85–C107, C154–C180, and C207–C229. The ZP domain maps to S276–R519. N419 is a glycosylation site (N-linked (GlcNAc...) asparagine). Cysteines 442 and 498 form a disulfide. Residues L569–V589 form a helical membrane-spanning segment. Residues K590–Y607 lie on the Cytoplasmic side of the membrane.

In terms of tissue distribution, highly expressed in pancreatic acinar cells. Also expressed in epithelium of the uterus during late pregnancy but not detected in non-pregnant uterus or in a variety of other adult and fetal tissues.

It is found in the zymogen granule membrane. Localized to zymogen granules, where it functions in trypsinogen activation. May indirectly regulate cell motility, cell-cell and cell/extracellular matrix interactions. In Mus musculus (Mouse), this protein is CUB and zona pellucida-like domain-containing protein 1.